The following is a 332-amino-acid chain: Casein kinase II subunit alpha (332 aa).

The Protein kinase domain maps to 34–319 (YEVVRKVGRG…ALEAMTHPYF (286 aa)). ATP contacts are provided by residues 40–48 (VGRGKYSEV) and K63. The Proton acceptor role is filled by D151.

Belongs to the protein kinase superfamily. Ser/Thr protein kinase family. CK2 subfamily. In terms of assembly, tetramer of two alpha and two beta chains (possible).

The enzyme catalyses L-seryl-[protein] + ATP = O-phospho-L-seryl-[protein] + ADP + H(+). It carries out the reaction L-threonyl-[protein] + ATP = O-phospho-L-threonyl-[protein] + ADP + H(+). Functionally, casein kinases are operationally defined by their preferential utilization of acidic proteins such as caseins as substrates. The alpha chain contains the catalytic site. This Zea mays (Maize) protein is Casein kinase II subunit alpha (ACK2).